Consider the following 481-residue polypeptide: Adenosylhomocysteinase (481 aa).

Residues Thr65, Asp140, and Glu200 each contribute to the substrate site. 201–203 provides a ligand contact to NAD(+); the sequence is TTT. The substrate site is built by Lys230 and Asp234. NAD(+) is bound by residues Asn235, 264–269, Glu287, Asn322, 343–345, and Asn393; these read GYGDVG and IGH.

This sequence belongs to the adenosylhomocysteinase family. It depends on NAD(+) as a cofactor.

It localises to the cytoplasm. It carries out the reaction S-adenosyl-L-homocysteine + H2O = L-homocysteine + adenosine. It functions in the pathway amino-acid biosynthesis; L-homocysteine biosynthesis; L-homocysteine from S-adenosyl-L-homocysteine: step 1/1. May play a key role in the regulation of the intracellular concentration of adenosylhomocysteine. The sequence is that of Adenosylhomocysteinase from Polynucleobacter necessarius subsp. necessarius (strain STIR1).